We begin with the raw amino-acid sequence, 441 residues long: Zinc finger and BTB domain-containing protein 8A (441 aa).

Residues 24 to 92 (CDCSILVEGK…VYSGKLSLTG (69 aa)) form the BTB domain. 2 stretches are compositionally biased toward polar residues: residues 143-170 (NGVE…SPEQ) and 178-196 (KSWN…TQQP). The disordered stretch occupies residues 143 to 251 (NGVERSSFYS…QSEEQAQIDA (109 aa)). 2 positions are modified to phosphoserine: serine 161 and serine 167. Glycyl lysine isopeptide (Lys-Gly) (interchain with G-Cter in SUMO2) cross-links involve residues lysine 178, lysine 182, lysine 191, and lysine 199. The segment covering 198–208 (AKHEPRKESIK) has biased composition (basic and acidic residues). Low complexity predominate over residues 234 to 243 (SDSSSHVSQS). 2 C2H2-type zinc fingers span residues 282-304 (FKCP…LRCH) and 310-333 (YPCQ…RTIH). Lysine 437 participates in a covalent cross-link: Glycyl lysine isopeptide (Lys-Gly) (interchain with G-Cter in SUMO2).

Its subcellular location is the nucleus. Its function is as follows. May be involved in transcriptional regulation. This chain is Zinc finger and BTB domain-containing protein 8A (ZBTB8A), found in Homo sapiens (Human).